Consider the following 123-residue polypeptide: Large ribosomal subunit protein uL14 (123 aa).

It belongs to the universal ribosomal protein uL14 family. Part of the 50S ribosomal subunit. Forms a cluster with proteins L3 and L19. In the 70S ribosome, L14 and L19 interact and together make contacts with the 16S rRNA in bridges B5 and B8.

Binds to 23S rRNA. Forms part of two intersubunit bridges in the 70S ribosome. The sequence is that of Large ribosomal subunit protein uL14 from Chromohalobacter salexigens (strain ATCC BAA-138 / DSM 3043 / CIP 106854 / NCIMB 13768 / 1H11).